The chain runs to 126 residues: MSKEYMNDGSLSEKWKYRFNFYDQHGFPGFWGATPEYKAAFKALKVRQRLTIQMNFIAFFCSWIYLFVLGLWKKAIIVLLLGILSLFVGALIGVNILGIAVAAYVAVNTNKWFYEKEVKGLNTWSL.

This is an uncharacterized protein from Escherichia coli (strain K12).